We begin with the raw amino-acid sequence, 688 residues long: Potassium-transporting ATPase ATP-binding subunit (688 aa).

A run of 4 helical transmembrane segments spans residues 34–54, 62–82, 219–239, and 260–280; these read PVMF…LDIL, AMFT…ANMA, VALT…TATL, and VLVA…LSAI. The active-site 4-aspartylphosphate intermediate is the Asp-313. ATP contacts are provided by residues Asp-350, Glu-354, 383–390, and Lys-401; that span reads FSAQTRMS. Mg(2+)-binding residues include Asp-524 and Asp-528. The next 3 membrane-spanning stretches (helical) occupy residues 594-614, 622-642, and 662-682; these read FAII…LNIM, AILS…PLAL, and IYGL…DLLL.

The protein belongs to the cation transport ATPase (P-type) (TC 3.A.3) family. Type IA subfamily. The system is composed of three essential subunits: KdpA, KdpB and KdpC.

The protein resides in the cell inner membrane. The enzyme catalyses K(+)(out) + ATP + H2O = K(+)(in) + ADP + phosphate + H(+). Its function is as follows. Part of the high-affinity ATP-driven potassium transport (or Kdp) system, which catalyzes the hydrolysis of ATP coupled with the electrogenic transport of potassium into the cytoplasm. This subunit is responsible for energy coupling to the transport system and for the release of the potassium ions to the cytoplasm. The protein is Potassium-transporting ATPase ATP-binding subunit of Yersinia pestis bv. Antiqua (strain Antiqua).